The chain runs to 210 residues: 7-methyl-GTP pyrophosphatase (210 aa).

Residue Asp79 is the Proton acceptor of the active site.

This sequence belongs to the Maf family. YceF subfamily. Requires a divalent metal cation as cofactor.

Its subcellular location is the cytoplasm. It catalyses the reaction N(7)-methyl-GTP + H2O = N(7)-methyl-GMP + diphosphate + H(+). Nucleoside triphosphate pyrophosphatase that hydrolyzes 7-methyl-GTP (m(7)GTP). May have a dual role in cell division arrest and in preventing the incorporation of modified nucleotides into cellular nucleic acids. The sequence is that of 7-methyl-GTP pyrophosphatase from Burkholderia lata (strain ATCC 17760 / DSM 23089 / LMG 22485 / NCIMB 9086 / R18194 / 383).